The following is a 60-amino-acid chain: Large ribosomal subunit protein bL32 (60 aa).

This sequence belongs to the bacterial ribosomal protein bL32 family.

This chain is Large ribosomal subunit protein bL32, found in Streptococcus suis (strain 05ZYH33).